Here is a 255-residue protein sequence, read N- to C-terminus: Electron transfer flavoprotein subunit beta (255 aa).

Position 2 is an N-acetylalanine (A2). AMP is bound by residues A9, 39 to 42 (NPFC), C66, and 123 to 134 (GKQAIDDDCNQT). The tract at residues 183–205 (ADLRLNEPRYATLPNIMKAKKKK) is recognition loop. K200 is modified (N6,N6,N6-trimethyllysine; by ETFBKMT; alternate). K200 bears the N6-acetyllysine; alternate mark. The residue at position 200 (K200) is an N6-methyllysine; alternate. K203 carries the N6,N6,N6-trimethyllysine; by ETFBKMT modification. Residue K210 is modified to N6-acetyllysine; alternate. Position 210 is an N6-succinyllysine; alternate (K210). Phosphoserine is present on residues S223 and S226. K238 is subject to N6-acetyllysine. An N6-acetyllysine; alternate modification is found at K248. At K248 the chain carries N6-succinyllysine; alternate.

It belongs to the ETF beta-subunit/FixA family. As to quaternary structure, heterodimer composed of ETFA and ETFB. Identified in a complex that contains ETFA, ETFB and ETFRF1. Interacts with ACADM. In terms of processing, methylated. Trimethylation at Lys-200 and Lys-203 may negatively regulate the activity in electron transfer from acyl-CoA dehydrogenases.

The protein localises to the mitochondrion matrix. Functionally, heterodimeric electron transfer flavoprotein that accepts electrons from several mitochondrial dehydrogenases, including acyl-CoA dehydrogenases, glutaryl-CoA and sarcosine dehydrogenase. It transfers the electrons to the main mitochondrial respiratory chain via ETF-ubiquinone oxidoreductase. Required for normal mitochondrial fatty acid oxidation and normal amino acid metabolism. ETFB binds an AMP molecule that probably has a purely structural role. This is Electron transfer flavoprotein subunit beta from Pongo abelii (Sumatran orangutan).